A 125-amino-acid polypeptide reads, in one-letter code: Small ribosomal subunit protein uS13 (125 aa).

Positions 92–125 are disordered; it reads RRSLPVRGQRTQTNARTRKGKRKTVAGKKKATKK. The segment covering 107–125 has biased composition (basic residues); sequence RTRKGKRKTVAGKKKATKK.

This sequence belongs to the universal ribosomal protein uS13 family. As to quaternary structure, part of the 30S ribosomal subunit. Forms a loose heterodimer with protein S19. Forms two bridges to the 50S subunit in the 70S ribosome.

Functionally, located at the top of the head of the 30S subunit, it contacts several helices of the 16S rRNA. In the 70S ribosome it contacts the 23S rRNA (bridge B1a) and protein L5 of the 50S subunit (bridge B1b), connecting the 2 subunits; these bridges are implicated in subunit movement. Contacts the tRNAs in the A and P-sites. The protein is Small ribosomal subunit protein uS13 of Chlorobium limicola (strain DSM 245 / NBRC 103803 / 6330).